A 142-amino-acid chain; its full sequence is MTTFTAKSETVQRDWYLVDAAGKTLGRLSTELARRLRGKHKPVYTPHVDTGDYLVVINAEKIVVTGNKLKDKKYHRFTGYIGNLKTESLEQALQRHPERVIEIAVKGMLPKGPMGRTMYRKLKVYSGAEHPHAAQQPQVLDI.

Belongs to the universal ribosomal protein uL13 family. In terms of assembly, part of the 50S ribosomal subunit.

This protein is one of the early assembly proteins of the 50S ribosomal subunit, although it is not seen to bind rRNA by itself. It is important during the early stages of 50S assembly. The polypeptide is Large ribosomal subunit protein uL13 (Xanthomonas oryzae pv. oryzae (strain MAFF 311018)).